A 422-amino-acid polypeptide reads, in one-letter code: Enolase (422 aa).

Residue Gln162 coordinates (2R)-2-phosphoglycerate. Residue Glu204 is the Proton donor of the active site. Mg(2+) is bound by residues Asp241, Glu285, and Asp312. Lys337, Arg366, Ser367, and Lys388 together coordinate (2R)-2-phosphoglycerate. The active-site Proton acceptor is Lys337.

Belongs to the enolase family. Requires Mg(2+) as cofactor.

Its subcellular location is the cytoplasm. It localises to the secreted. It is found in the cell surface. The enzyme catalyses (2R)-2-phosphoglycerate = phosphoenolpyruvate + H2O. The protein operates within carbohydrate degradation; glycolysis; pyruvate from D-glyceraldehyde 3-phosphate: step 4/5. Its function is as follows. Catalyzes the reversible conversion of 2-phosphoglycerate (2-PG) into phosphoenolpyruvate (PEP). It is essential for the degradation of carbohydrates via glycolysis. This chain is Enolase, found in Streptococcus thermophilus.